The chain runs to 416 residues: LL-diaminopimelate aminotransferase (416 aa).

Substrate contacts are provided by Y25 and G52. Pyridoxal 5'-phosphate is bound by residues Y78, 115–116 (SK), Y140, N190, Y221, and 248–250 (SFS). Positions 116, 140, and 190 each coordinate substrate. Residue K251 is modified to N6-(pyridoxal phosphate)lysine. R259 provides a ligand contact to pyridoxal 5'-phosphate.

It belongs to the class-I pyridoxal-phosphate-dependent aminotransferase family. As to quaternary structure, homodimer. Pyridoxal 5'-phosphate is required as a cofactor.

Its subcellular location is the cytoplasm. The enzyme catalyses (2S,6S)-2,6-diaminopimelate + 2-oxoglutarate = (S)-2,3,4,5-tetrahydrodipicolinate + L-glutamate + H2O + H(+). Its pathway is amino-acid biosynthesis; L-lysine biosynthesis via DAP pathway; LL-2,6-diaminopimelate from (S)-tetrahydrodipicolinate (aminotransferase route): step 1/1. Involved in the synthesis of meso-diaminopimelate (m-DAP or DL-DAP), required for both lysine and peptidoglycan biosynthesis. Catalyzes the direct conversion of tetrahydrodipicolinate to LL-diaminopimelate. This chain is LL-diaminopimelate aminotransferase (dapL), found in Methanococcus maripaludis (strain DSM 14266 / JCM 13030 / NBRC 101832 / S2 / LL).